Reading from the N-terminus, the 393-residue chain is Sex hormone-binding globulin (393 aa).

A signal peptide spans 1 to 27 (MEGRGPLATSPRRRWLLLLLLLPHSHQ). 2 Laminin G-like domains span residues 35 to 208 (VHLS…PRSC) and 215 to 381 (GSFF…THSC). 2 cysteine pairs are disulfide-bonded: C183–C208 and C353–C381. N-linked (GlcNAc...) asparagine glycans are attached at residues N371 and N387.

In terms of assembly, homodimer.

The protein resides in the secreted. Functions as an androgen transport protein, but may also be involved in receptor mediated processes. Each dimer binds one molecule of steroid. Specific for 5-alpha-dihydrotestosterone, testosterone, and 17-beta-estradiol. Regulates the plasma metabolic clearance rate of steroid hormones by controlling their plasma concentration. In Crocuta crocuta (Spotted hyena), this protein is Sex hormone-binding globulin (SHBG).